The sequence spans 95 residues: Exodeoxyribonuclease 7 small subunit (95 aa).

Residues 65-95 (ETINPAETARPAKPENAPESPRMNDLFGTES) are disordered.

Belongs to the XseB family. As to quaternary structure, heterooligomer composed of large and small subunits.

The protein localises to the cytoplasm. The catalysed reaction is Exonucleolytic cleavage in either 5'- to 3'- or 3'- to 5'-direction to yield nucleoside 5'-phosphates.. Functionally, bidirectionally degrades single-stranded DNA into large acid-insoluble oligonucleotides, which are then degraded further into small acid-soluble oligonucleotides. The sequence is that of Exodeoxyribonuclease 7 small subunit from Chlorobaculum tepidum (strain ATCC 49652 / DSM 12025 / NBRC 103806 / TLS) (Chlorobium tepidum).